A 120-amino-acid polypeptide reads, in one-letter code: Large ribosomal subunit protein uL22 (120 aa).

It belongs to the universal ribosomal protein uL22 family. Part of the 50S ribosomal subunit.

This protein binds specifically to 23S rRNA; its binding is stimulated by other ribosomal proteins, e.g. L4, L17, and L20. It is important during the early stages of 50S assembly. It makes multiple contacts with different domains of the 23S rRNA in the assembled 50S subunit and ribosome. Its function is as follows. The globular domain of the protein is located near the polypeptide exit tunnel on the outside of the subunit, while an extended beta-hairpin is found that lines the wall of the exit tunnel in the center of the 70S ribosome. This chain is Large ribosomal subunit protein uL22, found in Crocosphaera subtropica (strain ATCC 51142 / BH68) (Cyanothece sp. (strain ATCC 51142)).